Reading from the N-terminus, the 262-residue chain is Tryptophan synthase alpha chain (262 aa).

Active-site proton acceptor residues include Glu-52 and Asp-63.

The protein belongs to the TrpA family. In terms of assembly, tetramer of two alpha and two beta chains.

The catalysed reaction is (1S,2R)-1-C-(indol-3-yl)glycerol 3-phosphate + L-serine = D-glyceraldehyde 3-phosphate + L-tryptophan + H2O. It functions in the pathway amino-acid biosynthesis; L-tryptophan biosynthesis; L-tryptophan from chorismate: step 5/5. Its function is as follows. The alpha subunit is responsible for the aldol cleavage of indoleglycerol phosphate to indole and glyceraldehyde 3-phosphate. In Mycobacteroides abscessus (strain ATCC 19977 / DSM 44196 / CCUG 20993 / CIP 104536 / JCM 13569 / NCTC 13031 / TMC 1543 / L948) (Mycobacterium abscessus), this protein is Tryptophan synthase alpha chain.